Consider the following 452-residue polypeptide: MEKQYLTVTALTRYIKTKIEYDPHLQSVWLKGEISNFKNHSRGHMYFTLKDENARIAAVMFAGHNRNIKFRPENGMKVLVKGKISVYEASGSYQIYIQDMQPDGIGNLHLAYEQLKVRLEEEGLFSQVYKKTIPPYAKTIGVITSPTGAAIRDIITTIKRRYPIGNVIVFPVLVQGESAAPSIVQAIRTANEMEEIDVLIVGRGGGSIEELWAFNEEMVARAIFKSEIPIISAVGHETDFTIADFVADLRAPTPTAAAELAAPNIIELQEKVLQRTLRLQRAMRELVHKKEEKLQVLQKSYAFRYPRQVYEQKEEQLDRALEQLVLAKERYIDKKVNQLKQLSFYLEKHHPSQKIMQTKVAVETLQKQLQREMQTLLQTKEFAFVRAAQKLEALSPLKVMMRGYGLVYDEEKQVLKSVKDVSLGDAVSVQLQDGILDCSVSGIEERELNNGK.

The protein belongs to the XseA family. In terms of assembly, heterooligomer composed of large and small subunits.

It is found in the cytoplasm. The enzyme catalyses Exonucleolytic cleavage in either 5'- to 3'- or 3'- to 5'-direction to yield nucleoside 5'-phosphates.. Its function is as follows. Bidirectionally degrades single-stranded DNA into large acid-insoluble oligonucleotides, which are then degraded further into small acid-soluble oligonucleotides. The polypeptide is Exodeoxyribonuclease 7 large subunit (Bacillus thuringiensis (strain Al Hakam)).